A 759-amino-acid polypeptide reads, in one-letter code: Subtilisin-like protease SBT3.16 (759 aa).

An N-terminal signal peptide occupies residues 1–33 (MELSSLIVPNNKKHFVVVFIGLVLIFKIALITA). A propeptide spans 34-119 (ANEKSQIYTV…VTRSKNMKLK (86 aa)) (activation peptide). An Inhibitor I9 domain is found at 41 to 118 (YTVHLGERQH…RVTRSKNMKL (78 aa)). The Peptidase S8 domain occupies 124–608 (SDYLGLTSAA…GGLVNPVKVA (485 aa)). The active-site Charge relay system is Asp153. N-linked (GlcNAc...) asparagine glycans are attached at residues Asn186 and Asn209. The active-site Charge relay system is the His229. Asn371 carries an N-linked (GlcNAc...) asparagine glycan. The Charge relay system role is filled by Ser539. Asn632 and Asn711 each carry an N-linked (GlcNAc...) asparagine glycan.

This sequence belongs to the peptidase S8 family.

Its subcellular location is the secreted. In Arabidopsis thaliana (Mouse-ear cress), this protein is Subtilisin-like protease SBT3.16.